Here is a 364-residue protein sequence, read N- to C-terminus: Aminomethyltransferase (364 aa).

This sequence belongs to the GcvT family. The glycine cleavage system is composed of four proteins: P, T, L and H.

It carries out the reaction N(6)-[(R)-S(8)-aminomethyldihydrolipoyl]-L-lysyl-[protein] + (6S)-5,6,7,8-tetrahydrofolate = N(6)-[(R)-dihydrolipoyl]-L-lysyl-[protein] + (6R)-5,10-methylene-5,6,7,8-tetrahydrofolate + NH4(+). The glycine cleavage system catalyzes the degradation of glycine. The polypeptide is Aminomethyltransferase (Shigella dysenteriae serotype 1 (strain Sd197)).